The sequence spans 297 residues: Formylmethanofuran--tetrahydromethanopterin formyltransferase (297 aa).

The protein belongs to the FTR family. Homotetramer.

The protein localises to the cytoplasm. It catalyses the reaction N-formylmethanofuran + 5,6,7,8-tetrahydromethanopterin + H(+) = N(5)-formyl-5,6,7,8-tetrahydromethanopterin + methanofuran. It functions in the pathway one-carbon metabolism; methanogenesis from CO(2); 5,10-methenyl-5,6,7,8-tetrahydromethanopterin from CO(2): step 2/3. Its function is as follows. Catalyzes the reversible transfer of a formyl group from formylmethanofuran (formyl-MFR) to tetrahydromethanopterin (H(4)MPT) to produce 5-formyl tetrahydromethanopterin (5-formyl-H(4)MPT) and methanofuran (MFR). In Methanothermus fervidus (strain ATCC 43054 / DSM 2088 / JCM 10308 / V24 S), this protein is Formylmethanofuran--tetrahydromethanopterin formyltransferase.